Here is a 349-residue protein sequence, read N- to C-terminus: Threonine-rich protein (349 aa).

Positions 1 to 19 are cleaved as a signal peptide; sequence MKGLTLACIAATVVAASHA. The N-linked (GlcNAc...) asparagine glycan is linked to N257. The interval 300–326 is disordered; the sequence is QPDVSPMSVRKRRQAESAEEDDDLVGD. The span at 316-326 shows a compositional bias: acidic residues; it reads SAEEDDDLVGD. A coiled-coil region spans residues 316–349; it reads SAEEDDDLVGDMEDLKELEQEIQEALEEVEKLDV.

As to expression, component of the acid-insoluble and acid-soluble organic matrix of calcified layers of the shell (at protein level).

The protein resides in the secreted. The protein is Threonine-rich protein of Lottia gigantea (Giant owl limpet).